We begin with the raw amino-acid sequence, 91 residues long: Cytochrome c-554(547) (91 aa).

Heme c-binding residues include Cys-15, Cys-18, His-19, and Met-64.

Monomer. Post-translationally, binds 1 heme c group covalently per subunit.

The protein is Cytochrome c-554(547) of Halothiobacillus neapolitanus (Thiobacillus neapolitanus).